The following is a 255-amino-acid chain: tRNA (guanine-N(1)-)-methyltransferase (255 aa).

S-adenosyl-L-methionine-binding positions include G113 and 133-138 (IGDYVL).

Belongs to the RNA methyltransferase TrmD family. Homodimer.

The protein localises to the cytoplasm. It catalyses the reaction guanosine(37) in tRNA + S-adenosyl-L-methionine = N(1)-methylguanosine(37) in tRNA + S-adenosyl-L-homocysteine + H(+). Its function is as follows. Specifically methylates guanosine-37 in various tRNAs. This chain is tRNA (guanine-N(1)-)-methyltransferase, found in Mannheimia succiniciproducens (strain KCTC 0769BP / MBEL55E).